Reading from the N-terminus, the 453-residue chain is GTPase Der (453 aa).

EngA-type G domains are found at residues 4-169 (PIVA…PPTT) and 177-352 (IKIA…EEHK). GTP is bound by residues 10-17 (GRPNVGKS), 57-61 (DTGGL), 120-123 (NKCE), 183-190 (GRPNVGKS), 230-234 (DTAGI), and 295-298 (NKWD). Positions 353-438 (RRVSTSVINE…PIRLLWRSKK (86 aa)) constitute a KH-like domain.

Belongs to the TRAFAC class TrmE-Era-EngA-EngB-Septin-like GTPase superfamily. EngA (Der) GTPase family. Associates with the 50S ribosomal subunit.

Its function is as follows. GTPase that plays an essential role in the late steps of ribosome biogenesis. The sequence is that of GTPase Der from Trichormus variabilis (strain ATCC 29413 / PCC 7937) (Anabaena variabilis).